Here is an 89-residue protein sequence, read N- to C-terminus: MSLTKENKSNIITQFGGAVQNTGKAEVQVALFSGRITDLTGHLQKHPKDKHSRRGLLMLVGKRKKVLNYLKNVDIDRYRKVIADLDLRK.

It belongs to the universal ribosomal protein uS15 family. As to quaternary structure, part of the 30S ribosomal subunit. Forms a bridge to the 50S subunit in the 70S ribosome, contacting the 23S rRNA.

In terms of biological role, one of the primary rRNA binding proteins, it binds directly to 16S rRNA where it helps nucleate assembly of the platform of the 30S subunit by binding and bridging several RNA helices of the 16S rRNA. Forms an intersubunit bridge (bridge B4) with the 23S rRNA of the 50S subunit in the ribosome. The chain is Small ribosomal subunit protein uS15 from Chlorobium limicola (strain DSM 245 / NBRC 103803 / 6330).